The primary structure comprises 205 residues: Protein N-terminal glutamine amidohydrolase (205 aa).

Catalysis depends on residues cysteine 20, histidine 74, and aspartate 90.

It belongs to the NTAQ1 family. Monomer.

The catalysed reaction is N-terminal L-glutaminyl-[protein] + H2O = N-terminal L-glutamyl-[protein] + NH4(+). Its function is as follows. Mediates the side-chain deamidation of N-terminal glutamine residues to glutamate, an important step in N-end rule pathway of protein degradation. Conversion of the resulting N-terminal glutamine to glutamate renders the protein susceptible to arginylation, polyubiquitination and degradation as specified by the N-end rule. Does not act on substrates with internal or C-terminal glutamine and does not act on non-glutamine residues in any position. This is Protein N-terminal glutamine amidohydrolase (tun) from Drosophila grimshawi (Hawaiian fruit fly).